Here is a 1161-residue protein sequence, read N- to C-terminus: Nardilysin (1161 aa).

Residues 1–18 (MLRRVAVAAVCVTGRKLR) form the signal peptide. Disordered regions lie at residues 49–103 (MPGR…IIKS) and 130–218 (VEGK…KKTT). Phosphoserine occurs at positions 85, 91, and 93. The span at 138–209 (TDEEEEEEEE…EENELEELEE (72 aa)) shows a compositional bias: acidic residues. His244 is a Zn(2+) binding site. The active-site Proton acceptor is the Glu247. 2 residues coordinate Zn(2+): His248 and Glu325.

Belongs to the peptidase M16 family. Interacts with BACE1 and NRG1. Requires Zn(2+) as cofactor. In terms of tissue distribution, highly expressed in brain of early postnatal mice but expressed at a lower level in the brains of adult mice. Expression is high in cortical neurons, and lower in neurons in the striatum. Very low expression detected in the corpus callosum. Also expressed in the gray matter in spinal cord and dorsal root ganglia.

It is found in the mitochondrion. It localises to the cell projection. The protein resides in the dendrite. It catalyses the reaction Hydrolysis of polypeptides, preferably at -Xaa-|-Arg-Lys-, and less commonly at -Arg-|-Arg-Xaa-, in which Xaa is not Arg or Lys.. Functionally, cleaves peptide substrates on the N-terminus of arginine residues in dibasic pairs. Is a critical activator of BACE1- and ADAM17-mediated pro-neuregulin ectodomain shedding, involved in the positive regulation of axonal maturation and myelination. Required for proper functioning of 2-oxoglutarate dehydrogenase (OGDH). This Mus musculus (Mouse) protein is Nardilysin.